Here is a 222-residue protein sequence, read N- to C-terminus: Transcriptional regulatory protein PmrA (222 aa).

Residues 2–116 (KLLIVEDDKL…ELQARVRALI (115 aa)) enclose the Response regulatory domain. Asp51 is modified (4-aspartylphosphate). Positions 124 to 218 (NSKIQVDNIT…LRGFGYLLTK (95 aa)) form a DNA-binding region, ompR/PhoB-type.

Phosphorylated by PmrB.

The protein resides in the cytoplasm. Functionally, member of the two-component regulatory system PmrB/PmrA involved in regulation of virulence. Unphosphorylated PmrA represses extracellular enzyme genes. Phosphorylation of PmrA by PmrB relieves such repression, which leads to activation of extracellular enzyme genes. Phosphorylated PmrA seems to repress expression of the pmrCAB operon. The sequence is that of Transcriptional regulatory protein PmrA (pmrA) from Pectobacterium parmentieri.